Consider the following 198-residue polypeptide: Probable GTP-binding protein EngB (198 aa).

The EngB-type G domain maps to 22–195; it reads NIPEVALAGR…LEVIGRWVGL (174 aa). GTP contacts are provided by residues 30-37, 57-61, 75-78, 142-145, and 174-176; these read GRSNVGKS, GRTRL, DLPG, TKAD, and FSA. Residues serine 37 and threonine 59 each coordinate Mg(2+).

This sequence belongs to the TRAFAC class TrmE-Era-EngA-EngB-Septin-like GTPase superfamily. EngB GTPase family. The cofactor is Mg(2+).

Functionally, necessary for normal cell division and for the maintenance of normal septation. The protein is Probable GTP-binding protein EngB of Pelotomaculum thermopropionicum (strain DSM 13744 / JCM 10971 / SI).